Here is a 48-residue protein sequence, read N- to C-terminus: ATP synthase protein 8 (48 aa).

Residues 16–36 (GFLLMTILLVLFSQFFLPMIL) traverse the membrane as a helical segment.

It belongs to the ATPase protein 8 family. In terms of assembly, F-type ATPases have 2 components, CF(1) - the catalytic core - and CF(0) - the membrane proton channel.

It localises to the mitochondrion membrane. Functionally, mitochondrial membrane ATP synthase (F(1)F(0) ATP synthase or Complex V) produces ATP from ADP in the presence of a proton gradient across the membrane which is generated by electron transport complexes of the respiratory chain. F-type ATPases consist of two structural domains, F(1) - containing the extramembraneous catalytic core and F(0) - containing the membrane proton channel, linked together by a central stalk and a peripheral stalk. During catalysis, ATP synthesis in the catalytic domain of F(1) is coupled via a rotary mechanism of the central stalk subunits to proton translocation. Part of the complex F(0) domain. Minor subunit located with subunit a in the membrane. The chain is ATP synthase protein 8 (ATP8) from Vanderwaltozyma polyspora (strain ATCC 22028 / DSM 70294 / BCRC 21397 / CBS 2163 / NBRC 10782 / NRRL Y-8283 / UCD 57-17) (Kluyveromyces polysporus).